The chain runs to 433 residues: Xylose isomerase (433 aa).

Residues H99 and D102 contribute to the active site. 7 residues coordinate Mg(2+): E230, E266, H269, D294, D305, D307, and D337.

Belongs to the xylose isomerase family. In terms of assembly, homotetramer. It depends on Mg(2+) as a cofactor.

The protein resides in the cytoplasm. The enzyme catalyses alpha-D-xylose = alpha-D-xylulofuranose. The protein is Xylose isomerase of Cereibacter sphaeroides (strain ATCC 17029 / ATH 2.4.9) (Rhodobacter sphaeroides).